Consider the following 711-residue polypeptide: Ribosomal RNA large subunit methyltransferase K/L (711 aa).

The THUMP domain maps to 43–154 (TLYRTLLWSR…RENLVISLDL (112 aa)).

The protein belongs to the methyltransferase superfamily. RlmKL family.

The protein localises to the cytoplasm. It catalyses the reaction guanosine(2445) in 23S rRNA + S-adenosyl-L-methionine = N(2)-methylguanosine(2445) in 23S rRNA + S-adenosyl-L-homocysteine + H(+). The catalysed reaction is guanosine(2069) in 23S rRNA + S-adenosyl-L-methionine = N(2)-methylguanosine(2069) in 23S rRNA + S-adenosyl-L-homocysteine + H(+). Its function is as follows. Specifically methylates the guanine in position 2445 (m2G2445) and the guanine in position 2069 (m7G2069) of 23S rRNA. This Haemophilus influenzae (strain PittGG) protein is Ribosomal RNA large subunit methyltransferase K/L.